The following is a 23-amino-acid chain: Magainin-R2 (23 aa).

As to expression, expressed by the skin glands.

It is found in the secreted. Functionally, antimicrobial peptide. The chain is Magainin-R2 from Xenopus ruwenzoriensis (Uganda clawed frog).